Consider the following 401-residue polypeptide: (1R,4R,5S)-(-)-guaia-6,10(14)-diene synthase (401 aa).

Residues 1 to 21 are disordered; it reads MVKFDSGSESEMTNGDDLHIN. Residues aspartate 134 and glutamate 139 each coordinate Mg(2+). A DDXXD motif motif is present at residues 134-138; sequence DDQFD. Arginine 242 is a binding site for substrate. Residues asparagine 288 and serine 292 each coordinate Mg(2+). A substrate-binding site is contributed by lysine 295. Aspartate 296 contributes to the Mg(2+) binding site. A substrate-binding site is contributed by 375-376; sequence RY.

The protein belongs to the terpene synthase family. It depends on Mg(2+) as a cofactor.

It catalyses the reaction (2E,6E)-farnesyl diphosphate = (1R,4R,5S)-(-)-guaia-6,10(14)-diene + diphosphate. The protein operates within secondary metabolite biosynthesis; terpenoid biosynthesis. Its function is as follows. Catalyzes the conversion of (2E,6E)-farnesyl diphosphate (FPP) to yield the bicyclic sesquiterpene guaia-6,10(14)-diene via a 1,10-cyclization, which requires the abstraction of the pyrophosphate from FPP to yield the (E,E)-germacradienyl cation. The only accepted substrate is farnesyl diphosphate (FPP). The protein is (1R,4R,5S)-(-)-guaia-6,10(14)-diene synthase of Fusarium proliferatum (strain ET1) (Orchid endophyte fungus).